The chain runs to 505 residues: Zinc metalloproteinase/disintegrin (505 aa).

The N-terminal stretch at methionine 1–serine 20 is a signal peptide. A propeptide spanning residues isoleucine 21 to leucine 214 is cleaved from the precursor. Tandem repeats lie at residues lysine 153–isoleucine 179 and lysine 180–isoleucine 206. Positions arginine 220 to proline 416 constitute a Peptidase M12B domain. Residues glutamate 223 and aspartate 307 each contribute to the Ca(2+) site. Histidine 356 contacts Zn(2+). Glutamate 357 is a catalytic residue. Residues histidine 360 and histidine 366 each coordinate Zn(2+). Cystine bridges form between cysteine 371/cysteine 395 and cysteine 373/cysteine 378. Ca(2+)-binding residues include cysteine 411 and asparagine 414. The propeptide occupies leucine 417–leucine 432. One can recognise a Disintegrin domain in the interval threonine 424–alanine 505. 6 disulfide bridges follow: cysteine 438–cysteine 453, cysteine 440–cysteine 448, cysteine 447–cysteine 470, cysteine 461–cysteine 467, cysteine 466–cysteine 491, and cysteine 479–cysteine 498. Residues arginine 483–aspartate 485 carry the Cell attachment site motif.

Belongs to the venom metalloproteinase (M12B) family. P-II subfamily. P-IIa sub-subfamily. In terms of assembly, monomer. Zn(2+) is required as a cofactor. Expressed by the venom gland.

The protein localises to the secreted. Functionally, impairs hemostasis in the envenomed animal. In terms of biological role, inhibits platelet aggregation induced by ADP, thrombin, platelet-activating factor and collagen. Acts by inhibiting fibrinogen interaction with platelet receptors GPIIb/GPIIIa (ITGA2B/ITGB3). This chain is Zinc metalloproteinase/disintegrin, found in Gloydius brevicauda (Korean slamosa snake).